Consider the following 63-residue polypeptide: Acrosin inhibitor 1 (63 aa).

The Kazal-like domain occupies 8–63 (FGFPPDCKVYTEACTREYNPICDSAAKTYSNECTFCNEKMNNDADIHFNHFGECEY). 3 disulfides stabilise this stretch: Cys14–Cys43, Cys21–Cys40, and Cys29–Cys61.

Seminal plasma.

Its subcellular location is the secreted. Strong inhibitor of acrosin. This Bos taurus (Bovine) protein is Acrosin inhibitor 1.